The chain runs to 328 residues: Phosphate acyltransferase (328 aa).

Belongs to the PlsX family. As to quaternary structure, homodimer. Probably interacts with PlsY.

It is found in the cytoplasm. It catalyses the reaction a fatty acyl-[ACP] + phosphate = an acyl phosphate + holo-[ACP]. It functions in the pathway lipid metabolism; phospholipid metabolism. Functionally, catalyzes the reversible formation of acyl-phosphate (acyl-PO(4)) from acyl-[acyl-carrier-protein] (acyl-ACP). This enzyme utilizes acyl-ACP as fatty acyl donor, but not acyl-CoA. This chain is Phosphate acyltransferase, found in Staphylococcus aureus (strain bovine RF122 / ET3-1).